Consider the following 484-residue polypeptide: MEIISLNVVPQCSVVTWSSKLATKRLVPNRSSLLFSGVKKSRLVIRSGNSDGYVVGENDDLGRIARRGESTSKVLIPGLPDESNGEIAARISHSHCEWKPKLRVHYEKAGCDNLDAPAVLFLPGFGVGSFHYEKQLTDLGRDYRVWAIDFLGQGLSLPTEDPTTMTEETSSSEDKEPFWGFGDKTEPWADQLVFSLDLWRDQVQYFVEEVIGEPVYIAGNSLGGYVALYFAATHPHLVKGVTLLNATPFWGFFPNPVRSPKLARLFPWPGAFPLPERVKKITELVWQKISDPESIAEILKQVYTDHSINVDKVFSRIVEVTQHPAAAASFASIMLAPGGELSFSEALSRCKENNVQICLMYGREDPWVRPLWGKKIKKEIPNAPYYEISPAGHCPHDEVPEVVNYLMRGWIKHLESGGFEALPLLEDTEEDWEESRIGREIEFPRDGWKKAVNLWLYGSNYTYWRGVRESFRSSFIRVFGGKSA.

Residues 1–47 constitute a chloroplast transit peptide; the sequence is MEIISLNVVPQCSVVTWSSKLATKRLVPNRSSLLFSGVKKSRLVIRS.

Belongs to the AB hydrolase superfamily. As to quaternary structure, interacts with HCAR, RCCR, PAO and the LHCII complex. Part of a SGR1-CCE-LHCII complex, which acts in chlorophyll breakdown.

The protein resides in the plastid. The protein localises to the chloroplast thylakoid membrane. It localises to the chloroplast stroma. Alpha/beta hydrolase dephytylating specifically the Mg-free chlorophyll pigment (pheophytin), yielding pheophorbide. No activity on chlorophyll. Belongs to the chlorophyll catabolic enzymes (CCEs). The sequence is that of Pheophytinase, chloroplastic (PPH) from Arabidopsis thaliana (Mouse-ear cress).